The primary structure comprises 212 residues: MSYNDTWQPKTRLGGLVQDGEVEDMSEALDTGLPLKEPEIVDQLLPGLDDEVLDINMVQRMTDSGRRVKFRCVVAIGNRDGYVGYAEGRDDQVGGAIQKAIEVAKLNIIDVSRGCGSWECGCGRPHTVALKSTGKAGSVDVELMPAPRGLGLAGGETVQHVLELAGIDDVWTRSSGKTRTTVNFAKATFNALRETSEARVPQHAREEREVIE.

The region spanning 48–111 (LDDEVLDINM…EVAKLNIIDV (64 aa)) is the S5 DRBM domain.

This sequence belongs to the universal ribosomal protein uS5 family. Part of the 30S ribosomal subunit. Contacts protein S4.

With S4 and S12 plays an important role in translational accuracy. This is Small ribosomal subunit protein uS5 from Halobacterium salinarum (strain ATCC 700922 / JCM 11081 / NRC-1) (Halobacterium halobium).